Reading from the N-terminus, the 293-residue chain is uncharacterized protein (293 aa).

Positions 1–58 constitute an HTH lysR-type domain; the sequence is MELKQLITFITAAEHVNFTLTAKMLNYAQSSVTSQIKSLEEEIGTPLFERLGKRLILT. The H-T-H motif DNA-binding region spans 18-37; it reads FTLTAKMLNYAQSSVTSQIK.

It belongs to the LysR transcriptional regulatory family.

It is found in the cytoplasm. This is an uncharacterized protein from Bacillus subtilis (strain 168).